Consider the following 384-residue polypeptide: Neuropeptide Y receptor type 2 (384 aa).

Residues 1 to 54 lie on the Extracellular side of the membrane; it reads MKMGPLGAEADENQTVEEMKVDQFGPGHTTLPGELAPDSEPELIDSTKLIEVQV. N13 carries N-linked (GlcNAc...) asparagine glycosylation. Residues 55-75 traverse the membrane as a helical segment; that stretch reads VLILAYCSIILLGVIGNSLVI. Over 76-89 the chain is Cytoplasmic; sequence HVVIKFKSMRTVTN. A helical transmembrane segment spans residues 90–110; the sequence is FFIANLAVADLLVNTLCLPFT. At 111 to 127 the chain is on the extracellular side; that stretch reads LTYTLMGEWKMGPVLCH. A disulfide bridge links C126 with C206. A helical membrane pass occupies residues 128–148; the sequence is LVPYAQGLAVQVSTITLTVIA. Topologically, residues 149 to 168 are cytoplasmic; the sequence is LDRHRCIVYHLESKISKQIS. The helical transmembrane segment at 169-189 threads the bilayer; sequence FLIIGLAWGVSALLASPLAIF. The Extracellular segment spans residues 190–219; the sequence is REYSLIEIIPDFEIVACTEKWPGEEKGIYG. A helical membrane pass occupies residues 220 to 240; that stretch reads TIYSLSSLLILYVLPLGIISF. Topologically, residues 241-271 are cytoplasmic; the sequence is SYTRIWSKLKNHVSPGAAHDHYHQRRQKTTK. The chain crosses the membrane as a helical span at residues 272–292; the sequence is MLVCVVVVFAVSWLPLHAFQL. At 293–307 the chain is on the extracellular side; it reads AVDIDSHVLDLKEYK. The helical transmembrane segment at 308-328 threads the bilayer; it reads LIFTVFHIIAMCSTFANPLLY. Residues 329–384 lie on the Cytoplasmic side of the membrane; it reads GWMNSNYRKAFLSAFRCEQRLDAIHSEVSVTFKAKKHLQVTKNNGPNDSFTETTNV. A lipid anchor (S-palmitoyl cysteine) is attached at C345.

This sequence belongs to the G-protein coupled receptor 1 family.

It is found in the cell membrane. Functionally, receptor for neuropeptide Y and peptide YY. This Bos taurus (Bovine) protein is Neuropeptide Y receptor type 2 (NPY2R).